Reading from the N-terminus, the 88-residue chain is Sm-like protein LSM5 (88 aa).

A2 bears the N-acetylalanine mark. The Sm domain maps to 9–84; that stretch reads LPSELIDRCI…IAILVPGGSP (76 aa).

It belongs to the snRNP Sm proteins family. As to quaternary structure, component of the heptameric LSM1-LSM7 complex that forms a seven-membered ring structure with a donut shape. The LSM subunits are arranged in the order LSM1, LSM2, LSM3, LSM6, LSM5, LSM7 and LSM4. Component of the heptameric LSM2-LSM8 complex that forms a seven-membered ring structure with a donut shape. The LSM subunits are arranged in the order LSM8, LSM2, LSM3, LSM6, LSM5, LSM7 and LSM4. LSM2 subunit interacts only with its two neighboring subunits, LSM6A or LSM6B and LSM7. In terms of tissue distribution, expressed in roots, leaves, stems, flowers and siliques.

It is found in the cytoplasm. Its subcellular location is the nucleus. Functionally, component of LSM protein complexes, which are involved in RNA processing. Component of the cytoplasmic LSM1-LSM7 complex which is involved in mRNA degradation by promoting decapping and leading to accurate 5'-3' mRNA decay. The cytoplasmic LSM1-LSM7 complex regulates developmental gene expression by the decapping of specific development-related transcripts. Component of the nuclear LSM2-LSM8 complex which is involved splicing nuclear mRNAs. LSM2-LSM8 binds directly to the U6 small nuclear RNAs (snRNAs) and is essential for accurate splicing of selected development-related mRNAs through the stabilization of the spliceosomal U6 snRNA. Plays a critical role in the regulation of development-related gene expression. Involved in the control of plant sensitivity to abscisic acid (ABA) and drought. Functions with ABH1 as negative regulator of ABA signaling in guard cells. Required for regulation of splicing efficiency of many stress-responsive genes under stress conditions. The protein is Sm-like protein LSM5 of Arabidopsis thaliana (Mouse-ear cress).